Consider the following 212-residue polypeptide: Methylthioribulose-1-phosphate dehydratase (212 aa).

Residues histidine 103 and histidine 105 each contribute to the Zn(2+) site.

This sequence belongs to the aldolase class II family. MtnB subfamily. Zn(2+) is required as a cofactor.

The enzyme catalyses 5-(methylsulfanyl)-D-ribulose 1-phosphate = 5-methylsulfanyl-2,3-dioxopentyl phosphate + H2O. Its pathway is amino-acid biosynthesis; L-methionine biosynthesis via salvage pathway; L-methionine from S-methyl-5-thio-alpha-D-ribose 1-phosphate: step 2/6. In terms of biological role, catalyzes the dehydration of methylthioribulose-1-phosphate (MTRu-1-P) into 2,3-diketo-5-methylthiopentyl-1-phosphate (DK-MTP-1-P). The chain is Methylthioribulose-1-phosphate dehydratase from Sorangium cellulosum (strain So ce56) (Polyangium cellulosum (strain So ce56)).